A 727-amino-acid chain; its full sequence is MEDSYKDRTSLMKGAKDIAKEVKKQTVKKVNQAVDRAQDEYTQRSYSRFQDEDDDDDYYPPGETYSGEANDDEGSSEATEGHDEEDEIYEGEYQGIPSTNQGKDSIVSVGQPKGDEYKDRRELESERRADEEELAQQYELIIQECGHGRFQWALFFVLGMALMADGVEVFVVGFVLPSAETDLCIPNSGSGWLGSIVYLGMMVGAFFWGGLADKVGRKQSLLICMSVNGFFAFLSSFVQGYGFFLLCRLLSGFGIGGAIPTVFSYFAEVLAREKRGEHLSWLCMFWMIGGIYASAMAWAIIPHYGWSFSMGSAYQFHSWRVFVIVCALPCVSSVVALTFMPESPRFLLEVGKHDEAWMILKLIHDTNMRARGQPEKVFTVNKIKTPKQIDELIEIESDTGTWYRRCFVRIRTELYGIWLTFMRCFNYPVRENTIKLTIVWFTLSFGYYGLSVWFPDVIKHLQSDEYALLTRNVQKDKYANFSINFTMENQVHTGMEYDNGRFLGVKFKSVTFKDSVFKSCTFDDVTSVNTYFKNCTFIDTLFENTDFEPYKFIDSEFQNCSFLHNKTGCQITFDDDYSAYWIYFVNFLGTLAVLPGNIVSALLMDRIGRLTMLGGSMVLSGISCFFLWFGTSESMMIGMLCLYNGLTISAWNSLDVVTVELYPTDRRATGFGFLNALCKAAAVLGNLIFGSLVSITKAIPILLASTVLVCGGLVGLRLPDTRTQVLM.

The interval 1–57 (MEDSYKDRTSLMKGAKDIAKEVKKQTVKKVNQAVDRAQDEYTQRSYSRFQDEDDDDD) is interaction with SYT1. Residues 1-154 (MEDSYKDRTS…CGHGRFQWAL (154 aa)) lie on the Cytoplasmic side of the membrane. Positions 22-120 (VKKQTVKKVN…QPKGDEYKDR (99 aa)) are disordered. 2 positions are modified to phosphoserine: S75 and S76. At T79 the chain carries Phosphothreonine. A helical membrane pass occupies residues 155 to 175 (FFVLGMALMADGVEVFVVGFV). Over 176–191 (LPSAETDLCIPNSGSG) the chain is Extracellular. A helical transmembrane segment spans residues 192–212 (WLGSIVYLGMMVGAFFWGGLA). At 213–226 (DKVGRKQSLLICMS) the chain is on the cytoplasmic side. A helical transmembrane segment spans residues 227 to 247 (VNGFFAFLSSFVQGYGFFLLC). R248 is a topological domain (extracellular). Residues 249–269 (LLSGFGIGGAIPTVFSYFAEV) traverse the membrane as a helical segment. The Cytoplasmic segment spans residues 270 to 280 (LAREKRGEHLS). A helical membrane pass occupies residues 281 to 301 (WLCMFWMIGGIYASAMAWAII). The Extracellular portion of the chain corresponds to 302 to 320 (PHYGWSFSMGSAYQFHSWR). The chain crosses the membrane as a helical span at residues 321–341 (VFVIVCALPCVSSVVALTFMP). Over 342-437 (ESPRFLLEVG…PVRENTIKLT (96 aa)) the chain is Cytoplasmic. A helical membrane pass occupies residues 438 to 458 (IVWFTLSFGYYGLSVWFPDVI). The Extracellular segment spans residues 459–578 (KHLQSDEYAL…CQITFDDDYS (120 aa)). Y466 is modified (phosphotyrosine). N480, N484, N534, N559, and N565 each carry an N-linked (GlcNAc...) asparagine glycan. Residues 529–566 (NTYFKNCTFIDTLFENTDFEPYKFIDSEFQNCSFLHNK) form a (Microbial infection) C.botulinum neurotoxin type A-binding region. Residues 579–599 (AYWIYFVNFLGTLAVLPGNIV) traverse the membrane as a helical segment. The Cytoplasmic portion of the chain corresponds to 600-609 (SALLMDRIGR). The helical transmembrane segment at 610-630 (LTMLGGSMVLSGISCFFLWFG) threads the bilayer. At 631 to 636 (TSESMM) the chain is on the extracellular side. A helical transmembrane segment spans residues 637–657 (IGMLCLYNGLTISAWNSLDVV). Residues 658–670 (TVELYPTDRRATG) lie on the Cytoplasmic side of the membrane. The chain crosses the membrane as a helical span at residues 671-693 (FGFLNALCKAAAVLGNLIFGSLV). The Extracellular portion of the chain corresponds to 694–697 (SITK). The helical transmembrane segment at 698–716 (AIPILLASTVLVCGGLVGL) threads the bilayer. At 717–727 (RLPDTRTQVLM) the chain is on the cytoplasmic side.

Belongs to the major facilitator superfamily. As to quaternary structure, interacts with SYT1 in a calcium-dependent manner. In terms of assembly, (Microbial infection) Interacts with C.botulinum neurotoxin type A (BoNT/A, botA). (Microbial infection) Interacts with C.botulinum neurotoxin type F (BoNT/F). Interaction requires glycosylation of SV2 proteins. Post-translationally, N-glycosylated. Expressed at high levels in very few brain areas including the striatum, midbrain and hindbrain, and in the olfactory bulb. Expressed at lower levels in cerebrum, hippocampus and cerebellum (at protein level). Mainly expressed in brain; also detected in lung, liver, kidney.

It localises to the cytoplasmic vesicle. Its subcellular location is the secretory vesicle. The protein localises to the synaptic vesicle membrane. Plays a role in the control of regulated secretion in neural and endocrine cells, enhancing selectively low-frequency neurotransmission. Positively regulates vesicle fusion by maintaining the readily releasable pool of secretory vesicles. Functionally, (Microbial infection) Receptor for C.botulinum neurotoxin type A (BoNT/A, botA); the toxin binds Sv2c via extracellular loop 4. Restores uptake of BoNT/A in rat cells that are deleted for SV2 receptor. In terms of biological role, (Microbial infection) Possible receptor for C.botulinum neurotoxin type D (BoNT/D, botD); BoNT/D does not bind to extracellular loop 4 as do BoNT/A and BoNT/E. Another group does not find a convincing interaction with SV2. Its function is as follows. (Microbial infection) Receptor for C.botulinum neurotoxin type F (BoNT/F); binding requires glycosylation of Asn-573. This is Synaptic vesicle glycoprotein 2C (Sv2c) from Rattus norvegicus (Rat).